The following is a 625-amino-acid chain: MSTPAIPQDLQLNPSQRTQSAFREQRRQKLKEHLLKRKTSFACKQENQMLLSDGDQRVRTSEGQIQEGKKVLKIKTEMADKENVGRPTGIKNNLTVEKNCIPLKPSNELTNSTLATDPPNSEDNNQTLPLLPVKDDPQSQHRTLSQTFHLKNNSKKKPVITEKPKHDANVPKKPVLGAYRGQIVQSKINSFRKPLQVKDESSATTKKLPATVSKATKPQPGDVSSITVKSDRASHMTSTTKFASTTSQIRHLVRPPIRSQHNKAQDAMKPGNSRMSANVTVQKGPREKELNTVLSGIKTSSSQDIKGDKTLSKSMAAGMVVRPASSSNTKLIEKSKSAGQRSHTTVKAAVDSRWTQPKETAEERKARLSEWKAGKGRILKRPPSSAVTRPEPETQNEQPVGSFWTTMAEEDEQRLFTEKVNKTFSECLNLINEPIEEMRHTIVDILTRKSQEKLKFGENIEETSAAEEKIQEAHTDDTGVDLESGKLEMENNPPRNVFQDCEKEQDDKVKDPTSDVKTPSTNTRAGCLIKYNVSTTPYLQSVKKKMQFDETNSAYKELKFLTPVRRSRRLQEKTSKLPDMLKDHYPCVSSLEQLTELGCETDAFVCRPNTALCGMFSEPDPTEEE.

Polar residues-rich tracts occupy residues 1 to 22 and 107 to 128; these read MSTPAIPQDLQLNPSQRTQSAF and NELTNSTLATDPPNSEDNNQTL. 3 disordered regions span residues 1–27, 104–138, and 153–173; these read MSTPAIPQDLQLNPSQRTQSAFREQRR, KPSNELTNSTLATDPPNSEDNNQTLPLLPVKDDPQ, and NSKKKPVITEKPKHDANVPKK. Positions 159–170 are enriched in basic and acidic residues; that stretch reads VITEKPKHDANV. Ser190 carries the phosphoserine modification. Disordered stretches follow at residues 195-237, 259-282, 322-398, and 484-521; these read LQVK…SHMT, SQHNKAQDAMKPGNSRMSANVTVQ, RPAS…QNEQ, and SGKLEMENNPPRNVFQDCEKEQDDKVKDPTSDVKTPST. 2 stretches are compositionally biased toward basic and acidic residues: residues 359–373 and 500–514; these read ETAEERKARLSEWKA and DCEKEQDDKVKDPTS. Phosphothreonine occurs at positions 518 and 521. A Phosphoserine modification is found at Ser534. A phosphothreonine mark is found at Thr535 and Thr536. Tyr538 carries the phosphotyrosine modification. At Ser541 the chain carries Phosphoserine.

This sequence belongs to the CKAP2 family. Associates with alpha- and beta-tubulins.

The protein resides in the cytoplasm. It localises to the cytoskeleton. In terms of biological role, possesses microtubule stabilizing properties. Involved in regulating aneuploidy, cell cycling, and cell death in a p53/TP53-dependent manner. The sequence is that of Cytoskeleton-associated protein 2 (CKAP2) from Bos taurus (Bovine).